Here is a 378-residue protein sequence, read N- to C-terminus: Flap endonuclease 1 (378 aa).

The N-domain stretch occupies residues 1-102; the sequence is MGIHGLAKLI…GELAKRSERR (102 aa). Arg-19 bears the Symmetric dimethylarginine; by PRMT5 mark. Asp-34 lines the Mg(2+) pocket. Arg-47 and Arg-69 together coordinate DNA. Residue Lys-78 is modified to N6-acetyllysine. Asp-84 is a binding site for Mg(2+). Arg-98 and Arg-102 each carry symmetric dimethylarginine; by PRMT5. Residues 120–251 form an I-domain region; sequence EVEKFTKRLV…KRAVDLIQKH (132 aa). Mg(2+)-binding residues include Glu-156, Glu-158, Asp-177, and Asp-179. Glu-156 contributes to the DNA binding site. A Phosphoserine; by CDK2 modification is found at Ser-185. Symmetric dimethylarginine; by PRMT5 is present on Arg-190. Phosphoserine is present on Ser-195. DNA contacts are provided by Gly-229 and Asp-231. Residue Asp-231 participates in Mg(2+) binding. Phosphoserine is present on residues Ser-253, Ser-291, and Ser-333. The segment at 325 to 378 is disordered; that stretch reads RLSKSRQGSTQGRLDDFFKVTGSLSSAKRKEPEPKGPAKKKAKTGGAGKFRRGK. Position 334 is a phosphothreonine (Thr-334). The interval 334-342 is interaction with PCNA; it reads TQGRLDDFF. Lys-352, Lys-373, and Lys-378 each carry N6-acetyllysine. The segment covering 361–378 has biased composition (basic residues); that stretch reads PAKKKAKTGGAGKFRRGK.

Belongs to the XPG/RAD2 endonuclease family. FEN1 subfamily. Interacts with PCNA. Three molecules of FEN1 bind to one PCNA trimer with each molecule binding to one PCNA monomer. PCNA stimulates the nuclease activity without altering cleavage specificity. The C-terminal domain binds EP300; can bind simultaneously to both PCNA and EP300. Interacts with DDX11; this interaction is direct and increases flap endonuclease activity of FEN1. Interacts with WDR4; regulating its endonuclease activity. Interacts with POLB. Requires Mg(2+) as cofactor. Post-translationally, acetylated by EP300. Acetylation inhibits both endonuclease and exonuclease activity. Acetylation also reduces DNA-binding activity but does not affect interaction with PCNA or EP300. In terms of processing, phosphorylation upon DNA damage induces relocalization to the nuclear plasma. Phosphorylation at Ser-185 by CDK2 occurs during late S-phase and results in dissociation from PCNA. Methylation at Arg-190 by PRMT5 impedes Ser-185 phosphorylation and increases interaction with PCNA.

The protein localises to the nucleus. Its subcellular location is the nucleolus. The protein resides in the nucleoplasm. It is found in the mitochondrion. Functionally, structure-specific nuclease with 5'-flap endonuclease and 5'-3' exonuclease activities involved in DNA replication and repair. During DNA replication, cleaves the 5'-overhanging flap structure that is generated by displacement synthesis when DNA polymerase encounters the 5'-end of a downstream Okazaki fragment. It enters the flap from the 5'-end and then tracks to cleave the flap base, leaving a nick for ligation. Also involved in the long patch base excision repair (LP-BER) pathway, by cleaving within the apurinic/apyrimidinic (AP) site-terminated flap. Acts as a genome stabilization factor that prevents flaps from equilibrating into structures that lead to duplications and deletions. Also possesses 5'-3' exonuclease activity on nicked or gapped double-stranded DNA, and exhibits RNase H activity. Also involved in replication and repair of rDNA and in repairing mitochondrial DNA. The chain is Flap endonuclease 1 from Mus musculus (Mouse).